A 191-amino-acid polypeptide reads, in one-letter code: UPF0228 protein MM_1428 (191 aa).

It belongs to the UPF0228 family.

The polypeptide is UPF0228 protein MM_1428 (Methanosarcina mazei (strain ATCC BAA-159 / DSM 3647 / Goe1 / Go1 / JCM 11833 / OCM 88) (Methanosarcina frisia)).